Consider the following 132-residue polypeptide: MARVTVEDCIDKVDNRFELVLLASHRARQISQGAQITIDRDNDKNPVVALREIADETLSPDDLKEDLIHSLQKHVEVDEPEQDAASIAEGQLTSGSQDEDEMPETVAFDQMSEEELLAGIEGLVPPEKSDDY.

Residues Glu76–Thr105 form a disordered region.

The protein belongs to the RNA polymerase subunit omega family. As to quaternary structure, the RNAP catalytic core consists of 2 alpha, 1 beta, 1 beta' and 1 omega subunit. When a sigma factor is associated with the core the holoenzyme is formed, which can initiate transcription.

It catalyses the reaction RNA(n) + a ribonucleoside 5'-triphosphate = RNA(n+1) + diphosphate. Functionally, promotes RNA polymerase assembly. Latches the N- and C-terminal regions of the beta' subunit thereby facilitating its interaction with the beta and alpha subunits. The chain is DNA-directed RNA polymerase subunit omega from Allorhizobium ampelinum (strain ATCC BAA-846 / DSM 112012 / S4) (Agrobacterium vitis (strain S4)).